Reading from the N-terminus, the 734-residue chain is Photosystem I P700 chlorophyll a apoprotein A2 (734 aa).

8 consecutive transmembrane segments (helical) span residues 46 to 69 (IFASHFGQLAIIFLWTSGNLFHVA), 135 to 158 (LYTGALFLLLISAISLIAGWLHLQ), 175 to 199 (LNHHLSGLFGVSSLAWTGHLVHVAI), 273 to 291 (MAHHHLAIAFLFLIAGHMY), 330 to 353 (LHFQLGLALASLGVITSLVAQHMY), 369 to 395 (AALYTHHQYIAGFIMTGAFAHGAIFFI), 417 to 439 (AIISHLSWASLFLGFHTLGLYVH), and 517 to 535 (FLVHHAIALGLHTTTLILV). Residues cysteine 559 and cysteine 568 each contribute to the [4Fe-4S] cluster site. 2 consecutive transmembrane segments (helical) span residues 575–596 (AFYLAVFWMLNTIGWVTFYWHW) and 643–665 (LSVWAWMFLFGHLVWATGFMFLI). Residues histidine 654, methionine 662, and tyrosine 670 each coordinate chlorophyll a. Tryptophan 671 contributes to the phylloquinone binding site. Residues 707 to 727 (LVGLAHFSVGYIFTYAAFLIA) form a helical membrane-spanning segment.

This sequence belongs to the PsaA/PsaB family. In terms of assembly, the PsaA/B heterodimer binds the P700 chlorophyll special pair and subsequent electron acceptors. PSI consists of a core antenna complex that captures photons, and an electron transfer chain that converts photonic excitation into a charge separation. The eukaryotic PSI reaction center is composed of at least 11 subunits. It depends on P700 is a chlorophyll a/chlorophyll a' dimer, A0 is one or more chlorophyll a, A1 is one or both phylloquinones and FX is a shared 4Fe-4S iron-sulfur center. as a cofactor.

Its subcellular location is the plastid. It is found in the chloroplast thylakoid membrane. It carries out the reaction reduced [plastocyanin] + hnu + oxidized [2Fe-2S]-[ferredoxin] = oxidized [plastocyanin] + reduced [2Fe-2S]-[ferredoxin]. PsaA and PsaB bind P700, the primary electron donor of photosystem I (PSI), as well as the electron acceptors A0, A1 and FX. PSI is a plastocyanin-ferredoxin oxidoreductase, converting photonic excitation into a charge separation, which transfers an electron from the donor P700 chlorophyll pair to the spectroscopically characterized acceptors A0, A1, FX, FA and FB in turn. Oxidized P700 is reduced on the lumenal side of the thylakoid membrane by plastocyanin. This Lactuca sativa (Garden lettuce) protein is Photosystem I P700 chlorophyll a apoprotein A2.